The sequence spans 63 residues: Conotoxin Tx-D0111 (63 aa).

A signal peptide spans 1–19; the sequence is MRCLPVFVILLLLIASTPS. Residues 20 to 47 constitute a propeptide that is removed on maturation; the sequence is DTVPLKTKDDMPQASFHGNARRTLQMLS.

The protein belongs to the conotoxin T superfamily. Contains 2 disulfide bonds that can be either 'C1-C3, C2-C4' or 'C1-C4, C2-C3', since these disulfide connectivities have been observed for conotoxins with cysteine framework V (for examples, see AC P0DQQ7 and AC P81755). As to expression, expressed by the venom duct.

The protein resides in the secreted. In Conus textile (Cloth-of-gold cone), this protein is Conotoxin Tx-D0111.